The sequence spans 207 residues: ATP-dependent Clp protease proteolytic subunit (207 aa).

Residue Ser-111 is the Nucleophile of the active site. The active site involves His-136.

It belongs to the peptidase S14 family. In terms of assembly, fourteen ClpP subunits assemble into 2 heptameric rings which stack back to back to give a disk-like structure with a central cavity, resembling the structure of eukaryotic proteasomes.

It localises to the cytoplasm. It catalyses the reaction Hydrolysis of proteins to small peptides in the presence of ATP and magnesium. alpha-casein is the usual test substrate. In the absence of ATP, only oligopeptides shorter than five residues are hydrolyzed (such as succinyl-Leu-Tyr-|-NHMec, and Leu-Tyr-Leu-|-Tyr-Trp, in which cleavage of the -Tyr-|-Leu- and -Tyr-|-Trp bonds also occurs).. In terms of biological role, cleaves peptides in various proteins in a process that requires ATP hydrolysis. Has a chymotrypsin-like activity. Plays a major role in the degradation of misfolded proteins. The sequence is that of ATP-dependent Clp protease proteolytic subunit from Proteus mirabilis (strain HI4320).